The primary structure comprises 210 residues: Thymidylate kinase (210 aa).

An ATP-binding site is contributed by 16–23 (GGDGVGKS).

It belongs to the thymidylate kinase family.

The catalysed reaction is dTMP + ATP = dTDP + ADP. Phosphorylation of dTMP to form dTDP in both de novo and salvage pathways of dTTP synthesis. The protein is Thymidylate kinase of Leifsonia xyli subsp. xyli (strain CTCB07).